The sequence spans 570 residues: Periplasmic trehalase (570 aa).

Positions 1-34 (MIPPEIRRSVLLQKAIKLALAGTLLTFASFSATA) are cleaved as a signal peptide. Residues arginine 159, 166-167 (WD), asparagine 203, 212-214 (RSQ), 284-286 (RPE), and glycine 317 each bind substrate. Residues aspartate 319 and glutamate 503 each act as proton donor/acceptor in the active site. Glutamate 518 contributes to the substrate binding site. The disordered stretch occupies residues 544-570 (KPCDSVPSTRPASLSATPTKTPSAATQ). Over residues 554–570 (PASLSATPTKTPSAATQ) the composition is skewed to low complexity.

The protein belongs to the glycosyl hydrolase 37 family. As to quaternary structure, monomer.

Its subcellular location is the periplasm. It catalyses the reaction alpha,alpha-trehalose + H2O = alpha-D-glucose + beta-D-glucose. In terms of biological role, provides the cells with the ability to utilize trehalose at high osmolarity by splitting it into glucose molecules that can subsequently be taken up by the phosphotransferase-mediated uptake system. The polypeptide is Periplasmic trehalase (Salmonella schwarzengrund (strain CVM19633)).